A 1966-amino-acid polypeptide reads, in one-letter code: MENSHPPHHHHQQPPPQPGPSGERRNHHWRSYKLMIDPALKKGHHKLYRYDGQHFSLAMSSNRPVEIVEDPRVVGIWTKNKELELSVPKFKIDEFYVGPVPPKQVTFAKLNDNIRENFLRDMCKKYGEVEEVEILYNPKTKKHLGIAKVVFATVRGAKDAVQHLHSTSVMGNIIHVELDTKGETRMRFYELLVTGRYTPQTLPVGELDAVSPIVNETLQLSDALKRLKDGGLSAGCGSGSSSVTPNSGGTPFSQDTAYSSCRLDTPNSYGQGTPLTPRLGTPFSQDSSYSSRQPTPSYLFSQDPAVTFKARRHESKFTDAYNRRHEHHYVHNSPAVTAVAGATAAFRGSSDLPFGAVGGTGGSSGPPFKAQPQDSATFAHTPPPAQATPAPGFKSAFSPYQTPVAHFPPPPEEPTATAAFGARDSGEFRRAPAPPPLPPAEPLAKEKPGTPPGPPPPDTNSMELGGRPTFGWSPEPCDSPGTPTLESSPAGPEKPHDSLDSRIEMLLKEQRTKLLFLREPDSDTELQMEGSPISSSSSQLSPLAPFGTNSQPGFRGPTPPSSRPSSTGLEDISPTPLPDSDEDEELDLGLGPRPPPEPGPPDPAGLLSQTAEVALDLVGDRTPTSEKMDEGQQSSGEDMEISDDEMPSAPITSADCPKPMVVTPGAAAVAAPSVLAPTLPLPPPPGFPPLPPPPPPPPPQPGFPMPPPLPPPPPPPPPAHPAVTVPPPPLPAPPGVPPPPILPPLPPFPPGLFPVMQVDMSHVLGGQWGGMPMSFQMQTQVLSRLMTGQGACPYPPFMAAAAAAASAGLQFVNLPPYRGPFSLSNSGPGRGQHWPPLPKFDPSVPPPGYMPRQEDPHKATVDGVLLVVLKELKAIMKRDLNRKMVEVVAFRAFDEWWDKKERMAKASLTPVKSGEHKDEDRPKPKDRIASCLLESWGKGEGLGYEGLGLGIGLRGAIRLPSFKVKRKEPPDTTSSGDQKRLRPSTSVDEEDEESERERDRDMADTPCELAKRDPKGVGVRRRPARPLELDSGGEEDEKESLSASSSSSASSSSGSSTTSPSSSASDKEEEQESTEEEEEAEEEEEEEVPRSQLSSSSTSSTSDKDDDDDDSDDRDESENDDEDTALSEASEKDEGDSDEEETVSIVTSKAEATSSSESSESSEFESSSESSPSSSEDEEEVVAREEEEEEEEEEMVAEESMASAGPEDFEQDGEEAALAPGAPAVDSLGMEEEVDIETEAVAPEERPSMLDEPPLPVGVEEPADSREPPEEPGLSQEGAMLLSPEPPAKEVEARPPLSPERAPEHDLEVEPEPPMMLPLPLQPPLPPPRPPRPPSPPPEPETTDASHPSVPPEPLAEDHPPHTPGLCGSLAKSQSTETVPATPGGEPPLSGGSSGLSLSSPQVPGSPFSYPAPSPSLSSGGLPRTPGRDFSFTPTFSEPSGPLLLPVCPLPTGRRDERSGPLASPVLLETGLPLPLPLPLPLPLALPAVLRAQARAPTPLPPLLPAPLASCPPPMKRKPGRPRRSPPSMLSLDGPLVRPPAGAALGRELLLLPGQPQTPVFPSTHDPRTVTLDFRNAGIPAPPPPLPPQPPPPPPPPPVEPTKLPFKELDNQWPSEAIPPGPRGRDEVTEEYMELAKSRGPWRRPPKKRHEDLVPPAGSPELSPPQPLFRPRSEFEEMTILYDIWNGGIDEEDIRFLCVTYERLLQQDNGMDWLNDTLWVYHPSTSLSSAKKKKRDDGIREHVTGCARSEGFYTIDKKDKLRYLNSSRASTDEPPADTQGMSIPAQPHASTRAGSERRSEQRRLLSSFTGSCDSDLLKFNQLKFRKKKLKFCKSHIHDWGLFAMEPIAADEMVIEYVGQNIRQVIADMREKRYEDEGIGSSYMFRVDHDTIIDATKCGNFARFINHSCNPNCYAKVITVESQKKIVIYSKQHINVNEEITYDYKFPIEDVKIPCLCGSENCRGTLN.

Positions 1-12 (MENSHPPHHHHQ) are enriched in basic residues. The interval 1-26 (MENSHPPHHHHQQPPPQPGPSGERRN) is disordered. The interaction with WDR82 stretch occupies residues 68 to 98 (VEDPRVVGIWTKNKELELSVPKFKIDEFYVG). One can recognise an RRM domain in the interval 93 to 181 (DEFYVGPVPP…NIIHVELDTK (89 aa)). Disordered regions lie at residues 235-302 (GCGS…LFSQ), 357-660 (VGGT…PKPM), 675-719 (LAPT…PPPA), 963-1462 (KVKR…SGPL), 1501-1541 (PPLL…RPPA), 1555-1606 (QPQT…KLPF), and 1636-1668 (AKSR…PQPL). Composition is skewed to polar residues over residues 243–259 (VTPN…TAYS), 265–274 (TPNSYGQGTP), and 282–300 (PFSQ…SYLF). Pro residues-rich tracts occupy residues 432–441 (PAPPPLPPAE) and 449–458 (GTPPGPPPPD). Residues 493–521 (EKPHDSLDSRIEMLLKEQRTKLLFLREPD) show a composition bias toward basic and acidic residues. Positions 531 to 543 (SPISSSSSQLSPL) are enriched in low complexity. Pro residues predominate over residues 592 to 603 (PRPPPEPGPPDP). Residues 637-646 (EDMEISDDEM) show a composition bias toward acidic residues. The span at 679-719 (LPLPPPPGFPPLPPPPPPPPPQPGFPMPPPLPPPPPPPPPA) shows a compositional bias: pro residues. 2 positions are modified to phosphoserine: Ser-986 and Ser-994. Positions 995–1015 (ERERDRDMADTPCELAKRDPK) are enriched in basic and acidic residues. Ser-1031 carries the post-translational modification Phosphoserine. The span at 1041–1064 (LSASSSSSASSSSGSSTTSPSSSA) shows a compositional bias: low complexity. Composition is skewed to acidic residues over residues 1067–1087 (KEEE…EEEE) and 1104–1142 (KDDD…EEET). Low complexity predominate over residues 1148 to 1174 (SKAEATSSSESSESSEFESSSESSPSS). Positions 1173 to 1204 (SSSEDEEEVVAREEEEEEEEEEMVAEESMASA) form a coiled coil. 2 stretches are compositionally biased toward acidic residues: residues 1175–1197 (SEDE…EMVA) and 1229–1238 (GMEEEVDIET). A phosphoserine mark is found at Ser-1265, Ser-1283, and Ser-1335. The span at 1312 to 1340 (EPPMMLPLPLQPPLPPPRPPRPPSPPPEP) shows a compositional bias: pro residues. Residues 1383–1425 (PGGEPPLSGGSSGLSLSSPQVPGSPFSYPAPSPSLSSGGLPRT) are compositionally biased toward low complexity. A compositionally biased stretch (pro residues) spans 1501–1514 (PPLLPAPLASCPPP). Positions 1515–1524 (MKRKPGRPRR) are enriched in basic residues. Residues 1580 to 1600 (PAPPPPLPPQPPPPPPPPPVE) show a composition bias toward pro residues. Phosphoserine is present on residues Ser-1659 and Ser-1663. The WDR5 interaction motif (WIN) signature appears at 1745-1750 (GCARSE). The interval 1767–1800 (SRASTDEPPADTQGMSIPAQPHASTRAGSERRSE) is disordered. The RxxxRR motif signature appears at 1798-1803 (RSEQRR). In terms of domain architecture, SET spans 1827–1944 (KKLKFCKSHI…VNEEITYDYK (118 aa)). Tyr-1943 serves as a coordination point for S-adenosyl-L-methionine. The region spanning 1950 to 1966 (VKIPCLCGSENCRGTLN) is the Post-SET domain.

Belongs to the class V-like SAM-binding methyltransferase superfamily. Component of the SET1B/COMPASS complex composed of the catalytic subunit SETD1B, WDR5, WDR82, RBBP5, ASH2L/ASH2, CXXC1/CFP1, HCFC1, DPY30 homotrimer and BOD1. Forms a core complex with the evolutionary conserved subcomplex WRAD composed of WDR5, RBBP5, ASH2L/ASH2 and DPY30 subunits; WRAD differentially stimulates the methyltransferase activity. Interacts with HCFC1 and ASH2L/ASH2. Interacts (via N-terminal region) with WDR82. Interacts (via the RRM domain) with hyperphosphorylated C-terminal domain (CTD) of RNA polymerase II large subunit (POLR2A) only in the presence of WDR82. Binds specifically to CTD heptad repeats phosphorylated on 'Ser-5' of each heptad. Interacts with RBM15. Interacts (via WIN motif) with WDR5.

The protein resides in the nucleus. It is found in the nucleus speckle. It localises to the chromosome. The protein localises to the cytoplasm. The catalysed reaction is L-lysyl(4)-[histone H3] + S-adenosyl-L-methionine = N(6)-methyl-L-lysyl(4)-[histone H3] + S-adenosyl-L-homocysteine + H(+). It catalyses the reaction N(6)-methyl-L-lysyl(4)-[histone H3] + S-adenosyl-L-methionine = N(6),N(6)-dimethyl-L-lysyl(4)-[histone H3] + S-adenosyl-L-homocysteine + H(+). The enzyme catalyses N(6),N(6)-dimethyl-L-lysyl(4)-[histone H3] + S-adenosyl-L-methionine = N(6),N(6),N(6)-trimethyl-L-lysyl(4)-[histone H3] + S-adenosyl-L-homocysteine + H(+). Its function is as follows. Histone methyltransferase that catalyzes methyl group transfer from S-adenosyl-L-methionine to the epsilon-amino group of 'Lys-4' of histone H3 (H3K4) via a non-processive mechanism. Part of chromatin remodeling machinery, forms H3K4me1, H3K4me2 and H3K4me3 methylation marks at active chromatin sites where transcription and DNA repair take place. Plays an essential role in regulating the transcriptional programming of multipotent hematopoietic progenitor cells and lymphoid lineage specification during hematopoiesis. This Homo sapiens (Human) protein is Histone-lysine N-methyltransferase SETD1B (SETD1B).